The primary structure comprises 334 residues: tRNA N6-adenosine threonylcarbamoyltransferase (334 aa).

Fe cation is bound by residues histidine 112 and histidine 116. Substrate is bound by residues 135-139 (VVSGG), aspartate 168, glycine 181, aspartate 185, and asparagine 274. Aspartate 303 is a binding site for Fe cation.

The protein belongs to the KAE1 / TsaD family. Fe(2+) is required as a cofactor.

It is found in the cytoplasm. It carries out the reaction L-threonylcarbamoyladenylate + adenosine(37) in tRNA = N(6)-L-threonylcarbamoyladenosine(37) in tRNA + AMP + H(+). Its function is as follows. Required for the formation of a threonylcarbamoyl group on adenosine at position 37 (t(6)A37) in tRNAs that read codons beginning with adenine. Is involved in the transfer of the threonylcarbamoyl moiety of threonylcarbamoyl-AMP (TC-AMP) to the N6 group of A37, together with TsaE and TsaB. TsaD likely plays a direct catalytic role in this reaction. The polypeptide is tRNA N6-adenosine threonylcarbamoyltransferase (Anaeromyxobacter dehalogenans (strain 2CP-1 / ATCC BAA-258)).